The primary structure comprises 543 residues: Chaperonin GroEL (543 aa).

ATP is bound by residues 29-32 (TLGP), 86-90 (DGTTT), glycine 413, 476-478 (NAA), and aspartate 492.

The protein belongs to the chaperonin (HSP60) family. As to quaternary structure, forms a cylinder of 14 subunits composed of two heptameric rings stacked back-to-back. Interacts with the co-chaperonin GroES.

It is found in the cytoplasm. It catalyses the reaction ATP + H2O + a folded polypeptide = ADP + phosphate + an unfolded polypeptide.. In terms of biological role, together with its co-chaperonin GroES, plays an essential role in assisting protein folding. The GroEL-GroES system forms a nano-cage that allows encapsulation of the non-native substrate proteins and provides a physical environment optimized to promote and accelerate protein folding. The chain is Chaperonin GroEL from Streptococcus pyogenes serotype M1.